Consider the following 633-residue polypeptide: Cyclic GMP-AMP synthase-like receptor 1 (633 aa).

3 disordered regions span residues 23-80, 107-214, and 250-276; these read KVHG…HPHT, FKGP…TDPF, and REDD…RPSS. A compositionally biased stretch (basic and acidic residues) spans 29–67; that stretch reads KQHESAHPPRERHTERTATKRSDETKTASRPTASHEGKT. Positions 68–80 are enriched in polar residues; that stretch reads HTTNPRGQVHPHT. Composition is skewed to basic and acidic residues over residues 125–143, 176–194, and 250–274; these read RKPE…DHRT, RKPD…DHRT, and REDD…DDRP. Mg(2+) is bound by residues Glu353, Asp355, and Asp455.

This sequence belongs to the mab-21 family. The cofactor is Mg(2+). Mn(2+) is required as a cofactor.

It catalyses the reaction UTP + ATP = 2',3'-cUAMP + 2 diphosphate. Nucleotidyltransferase that catalyzes the formation of cyclic UMP-AMP (2',3'-cUAMP) from ATP and UTP and plays a key role in innate immunity. Acts as a key sensor of double-stranded DNA (dsDNA), the presence of dsDNA in the cytoplasm being a danger signal that triggers the immune responses. Directly binds dsDNA, activating the nucleotidyltransferase activity, leading to synthesis of 2',3'-cUAMP, a second messenger that binds to and activates Sting, thereby triggering the immune response via activation of the NF-kappa-B transcription factor. The protein is Cyclic GMP-AMP synthase-like receptor 1 of Crassostrea virginica (Eastern oyster).